A 115-amino-acid chain; its full sequence is MSNIIKQLEQEQMKQDVPSFRPGDTVEVKVWVVEGSKKRLQAFEGVVIAIRNRGLHSAFTVRKISNGEGVERVFQTHSPVVDSIAVKRRGAVRKAKLYYLRERTGKAARIKERLN.

Belongs to the bacterial ribosomal protein bL19 family.

Functionally, this protein is located at the 30S-50S ribosomal subunit interface and may play a role in the structure and function of the aminoacyl-tRNA binding site. This chain is Large ribosomal subunit protein bL19, found in Citrobacter koseri (strain ATCC BAA-895 / CDC 4225-83 / SGSC4696).